We begin with the raw amino-acid sequence, 492 residues long: uncharacterized protein (492 aa).

The next 13 helical transmembrane spans lie at 67-87, 88-108, 110-130, 157-177, 185-205, 232-252, 255-275, 294-314, 333-353, 367-387, 392-412, 434-454, and 464-484; these read VAIMSIYGSLVYMSTIIGGWL, ADRVFGTANTVFYGGIFIMFG, IALAYPGSSIAFYISMVLIIV, GFSIFYMGINLGGLLAPLIVG, YHLGFGAAAVGMLLGLIVFAL, IGVIIVAIAVIISVQTGVLTI, FIDLVSILGILIPVIYFIIMF, LFIGAVMFWAIQEQGATILAV, WFQSLNPLFVVIFAPIFAWLW, FSIGIILAGLSFIIMVFPAMQ, LVSPLWLVLSFLLVVLGELCL, SMWFLTNAAAQAINAQVAGLF, and GTIGLISIVLGGILLLLSPVI.

This sequence belongs to the major facilitator superfamily. Proton-dependent oligopeptide transporter (POT/PTR) (TC 2.A.17) family.

It localises to the cell membrane. This is an uncharacterized protein from Bacillus subtilis (strain 168).